A 2616-amino-acid polypeptide reads, in one-letter code: Serine protease ndl (2616 aa).

The N-terminal stretch at 1-43 (MNYNMDEMEATRLLRHPRRWWSIGFGKRIVAISILVIIVLLFS) is a signal peptide. Phosphoserine occurs at positions 215 and 220. A WIID 1 repeat occupies 261 to 269 (ISWIIDGHD). N-linked (GlcNAc...) asparagine glycosylation occurs at Asn-291. The stretch at 320–328 (ISWILDHFD) is one WIID 2 repeat. Residue Asn-347 is glycosylated (N-linked (GlcNAc...) asparagine). The interval 352 to 375 (SASSEPIVDTENTNSDHVPTTENG) is disordered. Asn-379 is a glycosylation site (N-linked (GlcNAc...) asparagine). Residues 399–407 (FDWILDGEE) form a WIID 3 repeat. N-linked (GlcNAc...) asparagine glycosylation occurs at Asn-417. WIID repeat units follow at residues 446–454 (FDWIIDGRE) and 477–485 (FDWIIDGEE). Residues Asn-492 and Asn-515 are each glycosylated (N-linked (GlcNAc...) asparagine). A WIID 6 repeat occupies 528–536 (FDWIIDGGE). Residues 537 to 547 (SSGEVSTSSTS) show a composition bias toward low complexity. A disordered region spans residues 537-574 (SSGEVSTSSTSQPKLTTREAISNPESPRSSHPLDNPTS). Over residues 548 to 565 (QPKLTTREAISNPESPRS) the composition is skewed to polar residues. Phosphoserine is present on residues Ser-574 and Ser-581. Asn-598 carries an N-linked (GlcNAc...) asparagine glycan. A glycan (O-linked (Xyl...) (glycosaminoglycan) serine) is linked at Ser-794. The disordered stretch occupies residues 798 to 817 (GQGANIFSKNASPQKPTNGQ). A compositionally biased stretch (polar residues) spans 804-817 (FSKNASPQKPTNGQ). N-linked (GlcNAc...) asparagine glycosylation occurs at Asn-827. Ser-829 carries an O-linked (Xyl...) (glycosaminoglycan) serine glycan. An N-linked (GlcNAc...) asparagine glycan is attached at Asn-861. 2 consecutive LDL-receptor class A domains span residues 889-929 (SRCP…ACTC) and 955-1006 (FGCE…QCSM). Disulfide bonds link Cys-891-Cys-905, Cys-899-Cys-918, and Cys-912-Cys-927. One can recognise an LDL-receptor class A 2; truncated domain in the interval 929–956 (CADRVDEERLCDGYEDCPMGEDELGCFG). Disulfide bonds link Cys-957-Cys-982, Cys-964-Cys-995, and Cys-989-Cys-1004. Residue Asn-975 is glycosylated (N-linked (GlcNAc...) asparagine). A Cell attachment site motif is present at residues 1031–1033 (RGD). Asn-1064 is a glycosylation site (N-linked (GlcNAc...) asparagine). Ser-1134 and Ser-1136 each carry phosphoserine. The 239-residue stretch at 1145 to 1383 (IVGGSYTSAL…YLDWLEMATT (239 aa)) folds into the Peptidase S1 1 domain. A disulfide bridge connects residues Cys-1170 and Cys-1186. Catalysis depends on charge relay system residues His-1185 and Asp-1233. 6 cysteine pairs are disulfide-bonded: Cys-1276/Cys-1338, Cys-1305/Cys-1317, Cys-1328/Cys-1359, Cys-1396/Cys-1408, Cys-1401/Cys-1421, and Cys-1415/Cys-1430. Catalysis depends on Ser-1332, which acts as the Charge relay system. One can recognise an LDL-receptor class A 4 domain in the interval 1394–1432 (QLCPGFICVWGGKRCIAKRQRCDRNVDCLGGEDEVGCTY). Residue Asn-1445 is glycosylated (N-linked (GlcNAc...) asparagine). 2 disordered regions span residues 1530–1557 (FTVS…PSTN) and 1683–1704 (PTTT…HSEK). Low complexity-rich tracts occupy residues 1537–1557 (TSPS…PSTN) and 1683–1700 (PTTT…SSST). The LDL-receptor class A 5; truncated domain occupies 1713 to 1743 (FVCKKMSQIVDIMMRCDRKVDCEDGTDELDC). Disulfide bonds link Cys-1728–Cys-1745, Cys-1734–Cys-1764, Cys-1758–Cys-1773, Cys-1776–Cys-1789, Cys-1783–Cys-1802, and Cys-1796–Cys-1811. One can recognise an LDL-receptor class A 6; truncated domain in the interval 1745-1775 (CKDYLKGSLKGLICDGKADCEDLTDEQNCVE). The region spanning 1774–1813 (VECQSNEFRCPLSKTCLPLSSRCDNKVDCKFKEDEKDCFA) is the LDL-receptor class A 7 domain. Asn-1878, Asn-1956, and Asn-2023 each carry an N-linked (GlcNAc...) asparagine glycan. Residues 2027 to 2301 (LVNEQLHEAI…LQDIIDKPSC (275 aa)) form the Peptidase S1 2 domain. Residues Cys-2055 and Cys-2071 are joined by a disulfide bond. N-linked (GlcNAc...) asparagine glycosylation is found at Asn-2144, Asn-2173, Asn-2197, Asn-2237, and Asn-2269. Cys-2177 and Cys-2230 are joined by a disulfide. LDL-receptor class A domains are found at residues 2308-2346 (PDCS…KCRQ), 2349-2389 (QQCA…ICSC), and 2419-2459 (CNCT…YCFG). Disulfide bonds link Cys-2310–Cys-2320, Cys-2315–Cys-2333, Cys-2327–Cys-2344, Cys-2351–Cys-2364, Cys-2358–Cys-2377, and Cys-2371–Cys-2387. Residues 2387 to 2419 (CSCFTYLQATDPSKICDGKRNCWDKSDESSVLC) enclose the LDL-receptor class A 10; truncated domain. The N-linked (GlcNAc...) asparagine glycan is linked to Asn-2420. 3 disulfide bridges follow: Cys-2421-Cys-2435, Cys-2428-Cys-2448, and Cys-2442-Cys-2457. Asn-2556 and Asn-2601 each carry an N-linked (GlcNAc...) asparagine glycan.

The protein belongs to the peptidase S1 family. Post-translationally, requires cleavage for activation (presumably). As to expression, follicle.

It localises to the secreted. The protein resides in the extracellular space. It is found in the extracellular matrix. In terms of biological role, component of the extracellular signaling pathway that establishes the dorsal-ventral pathway of the embryo. A protease cascade involving ndl, gd, snk and ea results in activation of the spz Toll receptor ligand; acts upstream of gd, snk and ea and is required for proteolytic processing of gd. Activation of ea requires activation of the ndl-gd-snk protease cascade and sulfation of a vitelline membrane component by pip. Localized activation of the Toll receptor in the ventral region of the embryo defines cell identities along the dorsal-ventral continuum. This is Serine protease ndl from Drosophila melanogaster (Fruit fly).